The chain runs to 353 residues: Phosphoribosylformylglycinamidine cyclo-ligase (353 aa).

The protein belongs to the AIR synthase family.

Its subcellular location is the cytoplasm. The catalysed reaction is 2-formamido-N(1)-(5-O-phospho-beta-D-ribosyl)acetamidine + ATP = 5-amino-1-(5-phospho-beta-D-ribosyl)imidazole + ADP + phosphate + H(+). The protein operates within purine metabolism; IMP biosynthesis via de novo pathway; 5-amino-1-(5-phospho-D-ribosyl)imidazole from N(2)-formyl-N(1)-(5-phospho-D-ribosyl)glycinamide: step 2/2. The polypeptide is Phosphoribosylformylglycinamidine cyclo-ligase (Pseudomonas aeruginosa (strain LESB58)).